We begin with the raw amino-acid sequence, 981 residues long: Rab3 GTPase-activating protein catalytic subunit (981 aa).

6 positions are modified to phosphoserine: Ser83, Ser379, Ser536, Ser579, Ser581, and Ser590. The segment at Gly532–Leu558 is disordered. Residues Asp591 to Leu614 are disordered. The residue at position 664 (Ser664) is a Phosphoserine.

The protein belongs to the Rab3-GAP catalytic subunit family. In terms of assembly, the Rab3 GTPase-activating complex is a heterodimer composed of Rab3gap1 and Rab3gap2. The Rab3 GTPase-activating complex interacts with DMXL2. Interacts with LMAN1. In the eye, it is highly expressed within the lens, particularly in the anterior lens epithelium and in a ring corresponding to the equatorial region where anterior cells are differentiating into lens fibers. Also highly expressed in the retina.

It localises to the cytoplasm. Its subcellular location is the endoplasmic reticulum. The protein resides in the golgi apparatus. The protein localises to the cis-Golgi network. Functionally, catalytic subunit of the Rab3 GTPase-activating (Rab3GAP) complex composed of RAB3GAP1 and RAB3GAP2, which has GTPase-activating protein (GAP) activity towards various Rab3 subfamily members (RAB3A, RAB3B, RAB3C and RAB3D), RAB5A and RAB43, and guanine nucleotide exchange factor (GEF) activity towards RAB18. As part of the Rab3GAP complex, acts as a GAP for Rab3 proteins by converting active RAB3-GTP to the inactive form RAB3-GDP. Rab3 proteins are involved in regulated exocytosis of neurotransmitters and hormones. The Rab3GAP complex, acts as a GEF for RAB18 by promoting the conversion of inactive RAB18-GDP to the active form RAB18-GTP. Recruits and stabilizes RAB18 at the cis-Golgi membrane where RAB18 is most likely activated. Also involved in RAB18 recruitment at the endoplasmic reticulum (ER) membrane where it maintains proper ER structure. Required for normal eye and brain development. May participate in neurodevelopmental processes such as proliferation, migration and differentiation before synapse formation, and non-synaptic vesicular release of neurotransmitters. The protein is Rab3 GTPase-activating protein catalytic subunit of Mus musculus (Mouse).